Reading from the N-terminus, the 372-residue chain is Cyclin-dependent kinase 9 (372 aa).

Residues 19–315 (YEKLAKIGQG…SDDALNHDFF (297 aa)) form the Protein kinase domain. 25 to 33 (IGQGTFGEV) contacts ATP. Lysine 35 bears the Phosphoserine mark. An N6-acetyllysine; by EP300/CBP, PCAF/KAT2B and GCN5/KAT2A modification is found at lysine 44. Residue lysine 48 coordinates ATP. Lysine 48 is modified (N6-acetyllysine; by PCAF/KAT2B and GCN5/KAT2A). The residue at position 54 (asparagine 54) is a Phosphothreonine. 104-106 (DFC) lines the ATP pocket. Aspartate 149 (proton acceptor) is an active-site residue. The tract at residues 166–191 (ADFGLARAFSLAKNSQPNRYTNRVVT) is T-loop. Residue aspartate 167 coordinates ATP. Serine 175 is subject to Phosphoserine. At threonine 186 the chain carries Phosphothreonine; by CaMK1D. The tract at residues 343-372 (RRKGSQITQQSTNQSRNPATTNQTEFERVF) is disordered. Residue serine 347 is modified to Phosphoserine; by CDK9 and PKA. Over residues 347–366 (SQITQQSTNQSRNPATTNQT) the composition is skewed to polar residues. Threonine 350 bears the Phosphothreonine; by CDK9 mark. A Phosphoserine; by CDK9 modification is found at serine 353. Threonine 354 carries the phosphothreonine; by CDK9 modification. Serine 357 is modified (phosphoserine; by CDK9). Residues threonine 362 and threonine 363 each carry the phosphothreonine; by CDK9 modification.

Belongs to the protein kinase superfamily. CMGC Ser/Thr protein kinase family. CDC2/CDKX subfamily. In terms of assembly, component of the super elongation complex (SEC), at least composed of EAF1, EAF2, CDK9, MLLT3/AF9, AFF (AFF1 or AFF4), the P-TEFb complex and ELL (ELL, ELL2 or ELL3). Associates with CCNT1/cyclin-T1, CCNT2/cyclin-T2 (isoform A and isoform B) or CCNK/cyclin-K to form active P-TEFb. P-TEFb forms a complex with AFF4/AF5Q31 and is part of the super elongation complex (SEC). Component of a complex which is composed of at least 5 members: HTATSF1/Tat-SF1, P-TEFb complex, RNA pol II, SUPT5H and NCL/nucleolin. Associates with UBR5 and forms a transcription regulatory complex composed of CDK9, RNAP II, UBR5 and TFIIS/TCEA1 that can stimulate target gene transcription (e.g. gamma fibrinogen/FGG) by recruiting their promoters. Component of the 7SK snRNP inactive complex which is composed of at least 8 members: P-TEFb (composed of CDK9 and CCNT1/cyclin-T1), HEXIM1, HEXIM2, LARP7, BCDIN3, SART3 proteins and 7SK and U6 snRNAs. This inactive 7SK snRNP complex can also interact with NCOR1 and HDAC3, probably to regulate CDK9 acetylation. Release of P-TEFb from P-TEFb/7SK snRNP complex requires both PP2B to transduce calcium Ca(2+) signaling in response to stimuli (e.g. UV or hexamethylene bisacetamide (HMBA)) and PPP1CA to dephosphorylate Thr-186. This released P-TEFb remains inactive in the pre-initiation complex with BRD4 until new Thr-186 phosphorylation occurs after the synthesis of a short RNA. Interacts with BRD4; to target chromatin binding. Interacts with JMJD6. Interacts with activated nuclear STAT3 and RELA/p65. Binds to AR and MYOD1. Forms a complex composed of CDK9, CCNT1/cyclin-T1, EP300 and GATA4 that stimulates hypertrophy in cardiomyocytes. The large PER complex involved in the repression of transcriptional termination is composed of at least PER2, CDK9, DDX5, DHX9, NCBP1 and POLR2A. Interacts with HSF1. Interacts with TBX21. Isoform 3: binds to KU70/XRCC6. Interacts with WDR43. Interacts with ZMYND8; the association appears to occur between homodimeric ZMYND8 and the activated form of the P-TEFb complex. As to quaternary structure, (Microbial infection) Interacts with the acidic/proline-rich region of HIV-1 and HIV-2 Tat via T-loop region and is thus required for HIV to hijack host transcription machinery during its replication through cooperative binding to viral TAR RNA. (Microbial infection) Interacts with human herpes virus 1 (HHV-1) protein ICP22; this interaction blocks the recruitment of positive transcription elongation factor b (P-TEFb) to the viral promoter. In terms of processing, autophosphorylation at Thr-186, Ser-347, Thr-350, Ser-353, Thr-354 and Ser-357 triggers kinase activity by promoting cyclin and substrate binding (e.g. HIV TAT) upon conformational changes. Thr-186 phosphorylation requires the calcium Ca(2+) signaling pathway, including CaMK1D and calmodulin. This inhibition is relieved by Thr-29 dephosphorylation. However, phosphorylation at Thr-29 is inhibitory within the HIV transcription initiation complex. Phosphorylation at Ser-175 inhibits kinase activity. Can be phosphorylated on either Thr-362 or Thr-363 but not on both simultaneously. Post-translationally, dephosphorylation of Thr-186 by PPM1A and PPM1B blocks CDK9 activity and may lead to CDK9 proteasomal degradation. However, PPP1CA-mediated Thr-186 dephosphorylation is required to release P-TEFb from its inactive P-TEFb/7SK snRNP complex. Dephosphorylated at Ser-347 by the PNUTS-PP1 complex during RNA polymerase II transcription pause-release. Dephosphorylation of C-terminus Thr and Ser residues by protein phosphatase-1 (PP1) triggers CDK9 activity, contributing to the activation of HIV-1 transcription. N6-acetylation of Lys-44 promotes kinase activity, whereas acetylation of both Lys-44 and Lys-48 mediated by PCAF/KAT2B and GCN5/KAT2A reduces kinase activity. The acetylated form associates with PML bodies in the nuclear matrix and with the transcriptionally silent HIV-1 genome; deacetylated upon transcription stimulation. Deacetylated by SIRT7, promoting the kinase activity and subsequent 'Ser-2' phosphorylation of the C-terminal domain (CTD) of RNA polymerase II. In terms of processing, polyubiquitinated and thus activated by UBR5. This ubiquitination is promoted by TFIIS/TCEA1 and favors 'Ser-2' phosphorylation of RPB1/POLR2A CTD. As to expression, ubiquitous.

The protein localises to the nucleus. It localises to the cytoplasm. It is found in the PML body. It catalyses the reaction L-seryl-[protein] + ATP = O-phospho-L-seryl-[protein] + ADP + H(+). The enzyme catalyses L-threonyl-[protein] + ATP = O-phospho-L-threonyl-[protein] + ADP + H(+). It carries out the reaction [DNA-directed RNA polymerase] + ATP = phospho-[DNA-directed RNA polymerase] + ADP + H(+). With respect to regulation, inhibited by CDKI-71, CR8, GPC-286199, AG-024322, flavopiridol (alvocidib), RBG-286147, anilinopyrimidine 32, arylazopyrazole 31b, indirubin 3'-monoxime, meriolin 3,P276-00, olomoucine II, pyrazolotriazine, meriolin, variolin, thiazolyl-pyrimidine, thiazolyl-pyrimidine, indirubin-30-monoxime, ZK 304709, AG-012986, AT7519, R547, RGB-286638, imidazole pyrimidine, EXEL-3700, EXEL-8647, 5,6-dichloro-1-b-ribofur-anosyl-benzimidazole (DRB), P276-00, roscovitine (seliciclib, CYC202) and SNS-032 (BMS-387032). Activation by Thr-186 phosphorylation is calcium Ca(2+) signaling pathway-dependent; actively inactivated by dephosphorylation mediated by PPP1CA, PPM1A and PPM1B. Reversibly repressed by acetylation at Lys-44 and Lys-48. Its function is as follows. Protein kinase involved in the regulation of transcription. Member of the cyclin-dependent kinase pair (CDK9/cyclin-T) complex, also called positive transcription elongation factor b (P-TEFb), which facilitates the transition from abortive to productive elongation by phosphorylating the CTD (C-terminal domain) of the large subunit of RNA polymerase II (RNAP II) POLR2A, SUPT5H and RDBP. This complex is inactive when in the 7SK snRNP complex form. Phosphorylates EP300, MYOD1, RPB1/POLR2A and AR and the negative elongation factors DSIF and NELFE. Regulates cytokine inducible transcription networks by facilitating promoter recognition of target transcription factors (e.g. TNF-inducible RELA/p65 activation and IL-6-inducible STAT3 signaling). Promotes RNA synthesis in genetic programs for cell growth, differentiation and viral pathogenesis. P-TEFb is also involved in cotranscriptional histone modification, mRNA processing and mRNA export. Modulates a complex network of chromatin modifications including histone H2B monoubiquitination (H2Bub1), H3 lysine 4 trimethylation (H3K4me3) and H3K36me3; integrates phosphorylation during transcription with chromatin modifications to control co-transcriptional histone mRNA processing. The CDK9/cyclin-K complex has also a kinase activity towards CTD of RNAP II and can substitute for CDK9/cyclin-T P-TEFb in vitro. Replication stress response protein; the CDK9/cyclin-K complex is required for genome integrity maintenance, by promoting cell cycle recovery from replication arrest and limiting single-stranded DNA amount in response to replication stress, thus reducing the breakdown of stalled replication forks and avoiding DNA damage. In addition, probable function in DNA repair of isoform 2 via interaction with KU70/XRCC6. Promotes cardiac myocyte enlargement. RPB1/POLR2A phosphorylation on 'Ser-2' in CTD activates transcription. AR phosphorylation modulates AR transcription factor promoter selectivity and cell growth. DSIF and NELF phosphorylation promotes transcription by inhibiting their negative effect. The phosphorylation of MYOD1 enhances its transcriptional activity and thus promotes muscle differentiation. Catalyzes phosphorylation of KAT5, promoting KAT5 recruitment to chromatin and histone acetyltransferase activity. In Homo sapiens (Human), this protein is Cyclin-dependent kinase 9.